A 146-amino-acid polypeptide reads, in one-letter code: Ribosome-binding factor A (146 aa).

The disordered stretch occupies residues 113–146 (IRDEREAQEPAQDPAQDSSQDASVEASDAPDKAE).

The protein belongs to the RbfA family. As to quaternary structure, monomer. Binds 30S ribosomal subunits, but not 50S ribosomal subunits or 70S ribosomes.

The protein resides in the cytoplasm. One of several proteins that assist in the late maturation steps of the functional core of the 30S ribosomal subunit. Associates with free 30S ribosomal subunits (but not with 30S subunits that are part of 70S ribosomes or polysomes). Required for efficient processing of 16S rRNA. May interact with the 5'-terminal helix region of 16S rRNA. The polypeptide is Ribosome-binding factor A (Gemmatimonas aurantiaca (strain DSM 14586 / JCM 11422 / NBRC 100505 / T-27)).